We begin with the raw amino-acid sequence, 259 residues long: L-ornithine N(alpha)-acyltransferase (259 aa).

Belongs to the acetyltransferase family. OlsB subfamily.

The catalysed reaction is a (3R)-hydroxyacyl-[ACP] + L-ornithine = a lyso-ornithine lipid + holo-[ACP] + H(+). It functions in the pathway lipid metabolism. Its function is as follows. Catalyzes the first step in the biosynthesis of ornithine lipids, which are phosphorus-free membrane lipids. Catalyzes the 3-hydroxyacyl-acyl carrier protein-dependent acylation of ornithine to form lyso-ornithine lipid (LOL). The chain is L-ornithine N(alpha)-acyltransferase from Rhodobacter capsulatus (strain ATCC BAA-309 / NBRC 16581 / SB1003).